A 404-amino-acid chain; its full sequence is MLRVPDVKASLVEGAARLSTGERVFHVLTSPAVAAMVGVSNPEVPMPLLFEKFGTPDSSTLPLYAARHPELSLLRIMLSPHPYALRSHLCVGEETASLGVYLHSKPVVRGHEFEDTQILPECRLAITSDQSYTNFKIIDLPAGCRRVPIHAANKRVVIDEAANRIKVFDPESPLPRHPITPRAGQTRSILKHNIAQVCERDIVSLNTDNEAASMFYMIGLRRPRLGESPVCDFNTVTIMERANNSITFLPKLKLNRLQHLFLKHVLLRSMGLENIVSCFSSLYGAELAPAKTHEREFFGALLERLKRRVEDAVFCLNTIEDFPFREPIRQPPDCSKVLIEAMEKYFMMCSPKDRQSAAWLGAGVVELICDGNPLSEVLGFLAKYMPIQKECTGNLLKIYALLTV.

This sequence belongs to the lymphocryptovirus BTRF1 family. In terms of assembly, interacts with ORF34.

It localises to the host nucleus. The protein resides in the host cytoplasm. Its function is as follows. Plays a role in the expression of late genes. The polypeptide is Protein ORF23 (ORF23) (Homo sapiens (Human)).